A 189-amino-acid chain; its full sequence is Peptidyl-tRNA hydrolase (189 aa).

TRNA is bound at residue Y15. H20 serves as the catalytic Proton acceptor. 3 residues coordinate tRNA: F66, N68, and N114.

Belongs to the PTH family. Monomer.

It localises to the cytoplasm. It carries out the reaction an N-acyl-L-alpha-aminoacyl-tRNA + H2O = an N-acyl-L-amino acid + a tRNA + H(+). In terms of biological role, hydrolyzes ribosome-free peptidyl-tRNAs (with 1 or more amino acids incorporated), which drop off the ribosome during protein synthesis, or as a result of ribosome stalling. Functionally, catalyzes the release of premature peptidyl moieties from peptidyl-tRNA molecules trapped in stalled 50S ribosomal subunits, and thus maintains levels of free tRNAs and 50S ribosomes. This chain is Peptidyl-tRNA hydrolase, found in Streptococcus thermophilus (strain CNRZ 1066).